A 111-amino-acid polypeptide reads, in one-letter code: Toxin 3FTx-Tel4 (111 aa).

An N-terminal signal peptide occupies residues 1–19; sequence MKTLLLALVVVAFMCLGSA. Residues 20-34 constitute a propeptide that is removed on maturation; the sequence is DQLGLGSQRIDWEQG. Glutamine 35 is subject to Pyrrolidone carboxylic acid. Intrachain disulfides connect cysteine 44–cysteine 68, cysteine 47–cysteine 55, cysteine 61–cysteine 87, cysteine 91–cysteine 102, and cysteine 103–cysteine 108.

The protein belongs to the three-finger toxin family. Ancestral subfamily. Boigatoxin sub-subfamily. Expressed by the venom gland.

The protein resides in the secreted. Functionally, potent postsynaptic neurotoxin. Displays readily reversible competitive antagonism at the nicotinic acetylcholine receptor (nAChR). The chain is Toxin 3FTx-Tel4 from Telescopus dhara (Egyptian catsnake).